A 304-amino-acid polypeptide reads, in one-letter code: Homoserine kinase (304 aa).

Residue 92–102 (PLARGLGSSAT) coordinates ATP.

Belongs to the GHMP kinase family. Homoserine kinase subfamily.

It is found in the cytoplasm. It carries out the reaction L-homoserine + ATP = O-phospho-L-homoserine + ADP + H(+). The protein operates within amino-acid biosynthesis; L-threonine biosynthesis; L-threonine from L-aspartate: step 4/5. In terms of biological role, catalyzes the ATP-dependent phosphorylation of L-homoserine to L-homoserine phosphate. The sequence is that of Homoserine kinase from Nostoc punctiforme (strain ATCC 29133 / PCC 73102).